Consider the following 122-residue polypeptide: Large ribosomal subunit protein uL14 (122 aa).

The protein belongs to the universal ribosomal protein uL14 family. In terms of assembly, part of the 50S ribosomal subunit. Forms a cluster with proteins L3 and L19. In the 70S ribosome, L14 and L19 interact and together make contacts with the 16S rRNA in bridges B5 and B8.

In terms of biological role, binds to 23S rRNA. Forms part of two intersubunit bridges in the 70S ribosome. The sequence is that of Large ribosomal subunit protein uL14 from Ruminiclostridium cellulolyticum (strain ATCC 35319 / DSM 5812 / JCM 6584 / H10) (Clostridium cellulolyticum).